A 117-amino-acid polypeptide reads, in one-letter code: DNA-directed RNA polymerase II subunit RPB11 (117 aa).

Met1 carries the post-translational modification N-acetylmethionine.

The protein belongs to the archaeal Rpo11/eukaryotic RPB11/RPC19 RNA polymerase subunit family. In terms of assembly, component of the RNA polymerase II (Pol II) core complex consisting of 12 subunits: a ten-subunit catalytic core composed of POLR2A/RPB1, POLR2B/RPB2, POLR2C/RPB3, POLR2I/RPB9, POLR2J/RPB11, POLR2E/RPABC1, POLR2F/RPABC2, POLR2H/RPABC3, POLR2K/RPABC4 and POLR2L/RPABC5 and a mobile stalk composed of two subunits POLR2D/RPB4 and POLR2G/RPB7, protruding from the core and functioning primarily in transcription initiation. Part of Pol II(G) complex, in which Pol II core associates with an additional subunit POLR2M; unlike conventional Pol II, Pol II(G) functions as a transcriptional repressor. Part of TBP-based Pol II pre-initiation complex (PIC), in which Pol II core assembles with general transcription factors and other specific initiation factors including GTF2E1, GTF2E2, GTF2F1, GTF2F2, TCEA1, ERCC2, ERCC3, GTF2H2, GTF2H3, GTF2H4, GTF2H5, GTF2A1, GTF2A2, GTF2B and TBP; this large multi-subunit PIC complex mediates DNA unwinding and targets Pol II core to the transcription start site where the first phosphodiester bond forms. Interacts with PTPN6; this interaction promotes the recruitment of RNA pol II to the PCK1 promoter.

The protein resides in the nucleus. Its function is as follows. DNA-dependent RNA polymerase catalyzes the transcription of DNA into RNA using the four ribonucleoside triphosphates as substrates. Component of RNA polymerase II which synthesizes mRNA precursors and many functional non-coding RNAs. Pol II is the central component of the basal RNA polymerase II transcription machinery. It is composed of mobile elements that move relative to each other. POLR2J/RPB11 is part of the core element with the central large cleft. The sequence is that of DNA-directed RNA polymerase II subunit RPB11 (POLR2J) from Bos taurus (Bovine).